The sequence spans 483 residues: Zinc metalloproteinase/disintegrin (483 aa).

An N-terminal signal peptide occupies residues 1–20 (MIQVLLVTLCLAAFPYQGNS). A propeptide spanning residues 21-191 (IILESGNVND…KASQLNLTPE (171 aa)) is cleaved from the precursor. The Peptidase M12B domain occupies 198–394 (RYIELVVVAD…HNPQCMLNEP (197 aa)). Glutamate 201 and aspartate 285 together coordinate Ca(2+). Disulfide bonds link cysteine 309-cysteine 389, cysteine 349-cysteine 373, and cysteine 351-cysteine 356. Residue histidine 334 participates in Zn(2+) binding. The active site involves glutamate 335. Zn(2+) contacts are provided by histidine 338 and histidine 344. Positions 389 and 392 each coordinate Ca(2+). The propeptide occupies 395-414 (LRTDIVSTPVSGNELWETGE). Residues 402–483 (TPVSGNELWE…AGCPRNPFHA (82 aa)) form the Disintegrin domain. 4 disulfide bridges follow: cysteine 425–cysteine 448, cysteine 439–cysteine 445, cysteine 444–cysteine 469, and cysteine 457–cysteine 476. The short motif at 461-463 (KGD) is the Cell attachment site; atypical (KGD) element.

The protein belongs to the venom metalloproteinase (M12B) family. P-II subfamily. P-IIe sub-subfamily. As to quaternary structure, heterodimer with piscivostatin-alpha; disulfide-linked (disintegrin). The cofactor is Zn(2+). In terms of tissue distribution, expressed by the venom gland.

Its subcellular location is the secreted. Its function is as follows. Impairs hemostasis in the envenomed animal. In terms of biological role, inhibits platelet aggregation induced by ADP. Acts by inhibiting fibrinogen interaction with platelet receptors GPIIb/GPIIIa (ITGA2B/ITGB3). Also inhibits platelet aggregate dissociation in human platelet-rich plasma. The polypeptide is Zinc metalloproteinase/disintegrin (Agkistrodon piscivorus piscivorus (Eastern cottonmouth)).